We begin with the raw amino-acid sequence, 966 residues long: Regulator of G-protein signaling 3 (966 aa).

Residues 18–95 form the PDZ domain; it reads QITIRRGKDG…EIILLVWRVV (78 aa). The segment at 115–135 is disordered; that stretch reads THDLLSPPNKREKNCTHGAPV. The residue at position 167 (Arg-167) is an Omega-N-methylarginine. 2 disordered regions span residues 403-618 and 637-704; these read EADE…TGAV and YSQL…RVQN. 2 stretches are compositionally biased toward polar residues: residues 527–548 and 576–594; these read PETS…TELP and SSAS…SSLG. The segment covering 649–675 has biased composition (acidic residues); it reads GEDEDAEEGEEGGEGEEDEEDDTSDDN. Positions 676 to 686 are enriched in basic and acidic residues; the sequence is YGDRSEAKRSS. Phosphoserine occurs at positions 712, 715, 747, and 776. The interval 806–830 is disordered; that stretch reads FRRRNESPGAQPASKTDKTTKSFKP. The segment covering 820–830 has biased composition (basic and acidic residues); sequence KTDKTTKSFKP. In terms of domain architecture, RGS spans 841–966; sequence SLEKLLLHKY…INQKKMSPPL (126 aa).

As to quaternary structure, binds the GNB1-GNG2 heterodimer. Binds EFNB1 and EFNB2. Post-translationally, phosphorylated by cyclic GMP-dependent protein kinase. ISGylated. Detected in embryos from E8.5-16.5 in cortical ventricular zone, dorsal root ganglia and cerebellar primordia. Isoform 3 is detected in testis and in spermatocytes from newborn mice. Levels increase and reach a maximum after 21 days; after this they decrease again. Long isoforms are widely expressed.

The protein localises to the cytoplasm. It localises to the cell membrane. Its subcellular location is the nucleus. Its function is as follows. Down-regulates signaling from heterotrimeric G-proteins by increasing the GTPase activity of the alpha subunits, thereby driving them into their inactive GDP-bound form. Down-regulates G-protein-mediated release of inositol phosphates and activation of MAP kinases. In Mus musculus (Mouse), this protein is Regulator of G-protein signaling 3 (Rgs3).